The primary structure comprises 503 residues: Probable cytosol aminopeptidase (503 aa).

Mn(2+) is bound by residues Lys-270 and Asp-275. The active site involves Lys-282. 3 residues coordinate Mn(2+): Asp-293, Asp-352, and Glu-354. Residue Arg-356 is part of the active site.

This sequence belongs to the peptidase M17 family. The cofactor is Mn(2+).

The protein resides in the cytoplasm. It carries out the reaction Release of an N-terminal amino acid, Xaa-|-Yaa-, in which Xaa is preferably Leu, but may be other amino acids including Pro although not Arg or Lys, and Yaa may be Pro. Amino acid amides and methyl esters are also readily hydrolyzed, but rates on arylamides are exceedingly low.. The catalysed reaction is Release of an N-terminal amino acid, preferentially leucine, but not glutamic or aspartic acids.. In terms of biological role, presumably involved in the processing and regular turnover of intracellular proteins. Catalyzes the removal of unsubstituted N-terminal amino acids from various peptides. In Citrobacter koseri (strain ATCC BAA-895 / CDC 4225-83 / SGSC4696), this protein is Probable cytosol aminopeptidase.